The primary structure comprises 138 residues: Sporulation-specific protein 13 (138 aa).

Residues 1-11 (MMSNSQISKLF) are compositionally biased toward polar residues. The tract at residues 1–31 (MMSNSQISKLFSSISNKENSNENALKESTNK) is disordered. A compositionally biased stretch (low complexity) spans 12-23 (SSISNKENSNEN). Residues 16 to 104 (NKENSNENAL…KRELDYLRAK (89 aa)) are a coiled coil.

In terms of assembly, interacts with spo2.

It localises to the cytoplasm. The protein localises to the cytoskeleton. It is found in the microtubule organizing center. The protein resides in the spindle pole body. In terms of biological role, involved in sporulation. Plays a significant role in modification of the spindle pole body prior to spore formation and is required for initiating forespore membrane formation. This chain is Sporulation-specific protein 13 (spo13), found in Schizosaccharomyces pombe (strain 972 / ATCC 24843) (Fission yeast).